The sequence spans 162 residues: 2-C-methyl-D-erythritol 2,4-cyclodiphosphate synthase (162 aa).

A divalent metal cation contacts are provided by Asp9 and His11. 4-CDP-2-C-methyl-D-erythritol 2-phosphate is bound by residues 9–11 and 37–38; these read DVH and HS. Position 45 (His45) interacts with a divalent metal cation.

Belongs to the IspF family. As to quaternary structure, homotrimer. A divalent metal cation serves as cofactor.

It catalyses the reaction 4-CDP-2-C-methyl-D-erythritol 2-phosphate = 2-C-methyl-D-erythritol 2,4-cyclic diphosphate + CMP. It functions in the pathway isoprenoid biosynthesis; isopentenyl diphosphate biosynthesis via DXP pathway; isopentenyl diphosphate from 1-deoxy-D-xylulose 5-phosphate: step 4/6. Functionally, involved in the biosynthesis of isopentenyl diphosphate (IPP) and dimethylallyl diphosphate (DMAPP), two major building blocks of isoprenoid compounds. Catalyzes the conversion of 4-diphosphocytidyl-2-C-methyl-D-erythritol 2-phosphate (CDP-ME2P) to 2-C-methyl-D-erythritol 2,4-cyclodiphosphate (ME-CPP) with a corresponding release of cytidine 5-monophosphate (CMP). The protein is 2-C-methyl-D-erythritol 2,4-cyclodiphosphate synthase of Petrotoga mobilis (strain DSM 10674 / SJ95).